The chain runs to 106 residues: UPF0145 protein VCM66_A0911 (106 aa).

The protein belongs to the UPF0145 family.

In Vibrio cholerae serotype O1 (strain M66-2), this protein is UPF0145 protein VCM66_A0911.